A 138-amino-acid chain; its full sequence is Putative pre-16S rRNA nuclease (138 aa).

The protein belongs to the YqgF nuclease family.

It localises to the cytoplasm. Functionally, could be a nuclease involved in processing of the 5'-end of pre-16S rRNA. In Bacteroides thetaiotaomicron (strain ATCC 29148 / DSM 2079 / JCM 5827 / CCUG 10774 / NCTC 10582 / VPI-5482 / E50), this protein is Putative pre-16S rRNA nuclease.